A 147-amino-acid chain; its full sequence is Lysozyme C-3 (147 aa).

An N-terminal signal peptide occupies residues 1-18; the sequence is MKALIILGFLFLSVAVQG. The C-type lysozyme domain occupies 19 to 147; it reads KVFERCELAR…VSSYVQGCTL (129 aa). Cystine bridges form between cysteine 24/cysteine 145, cysteine 48/cysteine 133, cysteine 83/cysteine 99, and cysteine 95/cysteine 113. Active-site residues include glutamate 53 and aspartate 71.

Belongs to the glycosyl hydrolase 22 family. As to quaternary structure, monomer. In terms of tissue distribution, stomach-specific.

It catalyses the reaction Hydrolysis of (1-&gt;4)-beta-linkages between N-acetylmuramic acid and N-acetyl-D-glucosamine residues in a peptidoglycan and between N-acetyl-D-glucosamine residues in chitodextrins.. Lysozymes have primarily a bacteriolytic function; those in tissues and body fluids are associated with the monocyte-macrophage system and enhance the activity of immunoagents. The polypeptide is Lysozyme C-3 (LYZ3) (Bos taurus (Bovine)).